The sequence spans 186 residues: Adenylate kinase (186 aa).

10–15 (GSGKGT) is an ATP binding site. Residues 30-55 (ATGDVFRERMKTDMALRDIVSSGGYV) are NMP. Residues T31, R36, 53–55 (GYV), 81–84 (GYPR), and Q88 contribute to the AMP site. An LID region spans residues 122–132 (ARSKESGRTDD). Residue R123 coordinates ATP. Residues R129 and R140 each coordinate AMP. An ATP-binding site is contributed by K168.

Belongs to the adenylate kinase family. Monomer.

The protein localises to the cytoplasm. The catalysed reaction is AMP + ATP = 2 ADP. It participates in purine metabolism; AMP biosynthesis via salvage pathway; AMP from ADP: step 1/1. Functionally, catalyzes the reversible transfer of the terminal phosphate group between ATP and AMP. Plays an important role in cellular energy homeostasis and in adenine nucleotide metabolism. The protein is Adenylate kinase of Tropheryma whipplei (strain TW08/27) (Whipple's bacillus).